A 302-amino-acid chain; its full sequence is ATP synthase gamma chain (302 aa).

This sequence belongs to the ATPase gamma chain family. F-type ATPases have 2 components, CF(1) - the catalytic core - and CF(0) - the membrane proton channel. CF(1) has five subunits: alpha(3), beta(3), gamma(1), delta(1), epsilon(1). CF(0) has three main subunits: a, b and c.

It is found in the cell membrane. Functionally, produces ATP from ADP in the presence of a proton gradient across the membrane. The gamma chain is believed to be important in regulating ATPase activity and the flow of protons through the CF(0) complex. The protein is ATP synthase gamma chain of Leuconostoc citreum (strain KM20).